A 226-amino-acid polypeptide reads, in one-letter code: Large ribosomal subunit protein uL1 (226 aa).

This sequence belongs to the universal ribosomal protein uL1 family. In terms of assembly, part of the 50S ribosomal subunit.

Binds directly to 23S rRNA. The L1 stalk is quite mobile in the ribosome, and is involved in E site tRNA release. Its function is as follows. Protein L1 is also a translational repressor protein, it controls the translation of the L11 operon by binding to its mRNA. This Mycoplasma pneumoniae (strain ATCC 29342 / M129 / Subtype 1) (Mycoplasmoides pneumoniae) protein is Large ribosomal subunit protein uL1.